Consider the following 335-residue polypeptide: 2-acylglycerol O-acyltransferase 1 (335 aa).

2 helical membrane-spanning segments follow: residues 24 to 44 and 104 to 124; these read WVLSFLLLVQVCIGIMVMLVL and YIFGFHPHGIFVPGAFGNFCT. Asn-180 carries N-linked (GlcNAc...) asparagine glycosylation.

It belongs to the diacylglycerol acyltransferase family. Expressed at high level in kidney and stomach. Expressed at lower level in brown and white adipose tissue, uterus and liver. Not detected in small intestine.

The protein resides in the endoplasmic reticulum membrane. It catalyses the reaction a 2-acylglycerol + an acyl-CoA = a 1,2-diacylglycerol + CoA. The catalysed reaction is 2-(9Z-octadecenoyl)-glycerol + butanoyl-CoA = 1-butanoyl-2-(9Z-octadecenoyl)-glycerol + CoA. It carries out the reaction 2-(9Z-octadecenoyl)-glycerol + octanoyl-CoA = 1-octanoyl-2-(9Z-octadecenoyl)-glycerol + CoA. The enzyme catalyses 2-(9Z-octadecenoyl)-glycerol + dodecanoyl-CoA = 1-dodecanoyl-2-(9Z-octadecenoyl)-glycerol + CoA. It catalyses the reaction 2-(9Z-octadecenoyl)-glycerol + tetradecanoyl-CoA = 1-tetradecanoyl-2-(9Z-octadecenoyl)-glycerol + CoA. The catalysed reaction is 2-(9Z-octadecenoyl)-glycerol + hexadecanoyl-CoA = 1-hexadecanoyl-2-(9Z-octadecenoyl)-glycerol + CoA. It carries out the reaction 2-(9Z-octadecenoyl)-glycerol + octadecanoyl-CoA = 1-octadecanoyl-2-(9Z-octadecenoyl)-glycerol + CoA. The enzyme catalyses eicosanoyl-CoA + 2-(9Z-octadecenoyl)-glycerol = 1-eicosanoyl-2-(9Z-octadecenoyl)-glycerol + CoA. It catalyses the reaction 2-(9Z-octadecenoyl)-glycerol + (9Z)-octadecenoyl-CoA = 1,2-di-(9Z-octadecenoyl)-glycerol + CoA. The catalysed reaction is 2-(9Z-octadecenoyl)-glycerol + (9Z,12Z)-octadecadienoyl-CoA = 1-(9Z,12Z-octadecadienoyl)-2-(9Z-octadecenoyl)-glycerol + CoA. It carries out the reaction 2-(9Z-octadecenoyl)-glycerol + (5Z,8Z,11Z,14Z)-eicosatetraenoyl-CoA = 1-(5Z,8Z,11Z,14Z-eicosatetraenoyl)-2-(9Z-octadecenoyl)-glycerol + CoA. The enzyme catalyses a 2-acylglycerol + an acyl-CoA = a 1,2-diacyl-sn-glycerol + CoA. It catalyses the reaction a 2-acylglycerol + an acyl-CoA = a 2,3-diacyl-sn-glycerol + CoA. The catalysed reaction is a 1-acylglycerol + an acyl-CoA = a 1,2-diacylglycerol + CoA. It carries out the reaction 1-dodecanoylglycerol + (9Z)-octadecenoyl-CoA = 1-dodecanoyl-2-(9Z-octadecenoyl)-glycerol + CoA. The enzyme catalyses 1-tetradecanoylglycerol + (9Z)-octadecenoyl-CoA = 1-tetradecanoyl-2-(9Z-octadecenoyl)-glycerol + CoA. It catalyses the reaction 1-hexadecanoylglycerol + (9Z)-octadecenoyl-CoA = 1-hexadecanoyl-2-(9Z-octadecenoyl)-glycerol + CoA. The catalysed reaction is 1-(9Z-octadecenoyl)-glycerol + (9Z)-octadecenoyl-CoA = 1,2-di-(9Z-octadecenoyl)-glycerol + CoA. It carries out the reaction 1-(9Z,12Z-octadecadienoyl)-glycerol + (9Z)-octadecenoyl-CoA = 1-(9Z,12Z-octadecadienoyl)-2-(9Z-octadecenoyl)-glycerol + CoA. The enzyme catalyses 1-(9Z,12Z,15Z-octadecatrienoyl)-glycerol + (9Z)-octadecenoyl-CoA = 1-(9Z,12Z,15Z-octadecatrienoyl)-2-(9Z-octadecenoyl)-glycerol + CoA. It catalyses the reaction 1-(5Z,8Z,11Z,14Z-eicosatetraenoyl)-glycerol + (9Z)-octadecenoyl-CoA = 1-(5Z,8Z,11Z,14Z-eicosatetraenoyl)-2-(9Z-octadecenoyl)-glycerol + CoA. The catalysed reaction is a 1-acylglycerol + an acyl-CoA = a 1,3-diacylglycerol + CoA. It carries out the reaction 1-dodecanoylglycerol + (9Z)-octadecenoyl-CoA = 1-dodecanoyl-3-(9Z-octadecenoyl)-glycerol + CoA. The enzyme catalyses 1-hexadecanoylglycerol + (9Z)-octadecenoyl-CoA = 1-(9Z-octadecenoyl)-3-hexadecanoylglycerol + CoA. It catalyses the reaction 1-octadecanoylglycerol + (9Z)-octadecenoyl-CoA = 1-octadecanoyl-3-(9Z-octadecenoyl)-glycerol + CoA. The catalysed reaction is 1-(9Z-octadecenoyl)-sn-glycerol + (9Z)-octadecenoyl-CoA = 1,3-di-(9Z-octadecenoyl)-glycerol + CoA. It carries out the reaction 1-(9Z,12Z-octadecadienoyl)-glycerol + (9Z)-octadecenoyl-CoA = 1-(9Z-octadecenoyl)-3-(9Z,12Z-octadecadienoyl)-glycerol + CoA. The enzyme catalyses 1-(9Z,12Z,15Z-octadecatrienoyl)-glycerol + (9Z)-octadecenoyl-CoA = 1-(9Z,12Z,15Z-octadecatrienoyl)-3-(9Z-octadecenoyl)-glycerol + CoA. It catalyses the reaction a 1-acyl-sn-glycerol + an acyl-CoA = a 1,3-diacyl-sn-glycerol + CoA. The catalysed reaction is a 3-acyl-sn-glycerol + an acyl-CoA = a 1,3-diacyl-sn-glycerol + CoA. It carries out the reaction 3-octadecanoyl-sn-glycerol + (9Z)-octadecenoyl-CoA = 1-(9Z-octadecenoyl)-3-octadecanoyl-sn-glycerol + CoA. It functions in the pathway glycerolipid metabolism; triacylglycerol biosynthesis. In terms of biological role, involved in glycerolipid synthesis and lipid metabolism. Catalyzes the formation of diacylglycerol, the precursor of triacylglycerol, by transferring the acyl chain of a fatty acyl-CoA to a monoacylglycerol, mainly at the sn-1 or sn-3 positions. It uses both sn-2-monoacylglycerol (2-acylglycerol) and sn-1-monoacylglycerol (1-acyl-sn-glycerol) equally well as substrates, and uses sn-3-monoacylglycerol (3-acyl-sn-glycerol) with lower efficiency. Probably not involved in absorption of dietary fat in the small intestine. This chain is 2-acylglycerol O-acyltransferase 1, found in Mus musculus (Mouse).